A 492-amino-acid polypeptide reads, in one-letter code: JmjC domain-containing histone demethylation protein 1 (492 aa).

Residues 4-72 (PNICQHCQLK…SYRCPNHKEG (69 aa)) form a PHD-type; atypical zinc finger. The region spanning 254–409 (TAVRQNDLVD…THLKIVEIEK (156 aa)) is the JmjC domain. Thr-302 lines the substrate pocket. Positions 305 and 307 each coordinate Fe cation. Lys-322 is a binding site for substrate. His-377 contributes to the Fe cation binding site.

It belongs to the JHDM1 histone demethylase family. It depends on Fe(2+) as a cofactor.

The protein resides in the nucleus. It carries out the reaction N(6),N(6)-dimethyl-L-lysyl(36)-[histone H3] + 2 2-oxoglutarate + 2 O2 = L-lysyl(36)-[histone H3] + 2 formaldehyde + 2 succinate + 2 CO2. Functionally, histone demethylase that specifically demethylates 'Lys-36' of histone H3, thereby playing a central role in histone code. Does not demethylate H3 'Lys-4' nor 'Lys-79'. The polypeptide is JmjC domain-containing histone demethylation protein 1 (JHD1) (Saccharomyces cerevisiae (strain ATCC 204508 / S288c) (Baker's yeast)).